The primary structure comprises 750 residues: Neprilysin (750 aa).

Polar residues predominate over residues 1-14 (MGRSESQMDITDIN). The disordered stretch occupies residues 1–20 (MGRSESQMDITDINTPKPKK). Glycine 2 is lipidated: N-myristoyl glycine. At 2-28 (GRSESQMDITDINTPKPKKKQRWTPLE) the chain is on the cytoplasmic side. Serine 4 and serine 6 each carry phosphoserine. Positions 16–23 (PKPKKKQR) match the Stop-transfer sequence motif. A helical; Signal-anchor for type II membrane protein membrane pass occupies residues 29–51 (ISLSVLVLLLTVIAVTMIALYAT). Topologically, residues 52–750 (YDDGICKSSD…MNPEKKCRVW (699 aa)) are extracellular. In terms of domain architecture, Peptidase M13 spans 56-750 (ICKSSDCIKS…MNPEKKCRVW (695 aa)). Intrachain disulfides connect cysteine 57–cysteine 62, cysteine 80–cysteine 735, cysteine 88–cysteine 695, cysteine 143–cysteine 411, cysteine 234–cysteine 242, and cysteine 621–cysteine 747. Arginine 103 is a binding site for a peptide. N-linked (GlcNAc...) asparagine glycosylation is present at asparagine 145. N-linked (GlcNAc...) asparagine glycans are attached at residues asparagine 285, asparagine 311, and asparagine 325. Residue histidine 584 participates in Zn(2+) binding. The active site involves glutamate 585. Histidine 588 is a binding site for Zn(2+). The N-linked (GlcNAc...) asparagine glycan is linked to asparagine 628. Glutamate 647 provides a ligand contact to Zn(2+). Aspartate 651 serves as the catalytic Proton donor.

This sequence belongs to the peptidase M13 family. Zn(2+) serves as cofactor. In terms of processing, myristoylation is a determinant of membrane targeting. Post-translationally, glycosylation at Asn-628 is necessary both for surface expression and neutral endopeptidase activity.

The protein resides in the cell membrane. The catalysed reaction is Preferential cleavage of polypeptides between hydrophobic residues, particularly with Phe or Tyr at P1'.. It carries out the reaction substance P + H2O = substance P(1-9) + L-Leu-L-Met-NH2. It catalyses the reaction substance P + H2O = substance P(1-7) + L-Phe-Gly-L-Leu-L-Met-NH2. The enzyme catalyses neurotensin + H2O = neurotensin(1-11) + L-isoleucyl-L-leucine. The catalysed reaction is neurotensin + H2O = neurotensin(1-10) + L-tyrosyl-L-isoleucyl-L-leucine. With respect to regulation, inhibited by mixanpril, an orally-active drug used for the treatment of hypertension. Thermolysin-like specificity, but is almost confined on acting on polypeptides of up to 30 amino acids. Biologically important in the destruction of opioid peptides such as Met- and Leu-enkephalins by cleavage of a Gly-Phe bond. Catalyzes cleavage of bradykinin, substance P and neurotensin peptides. Able to cleave angiotensin-1, angiotensin-2 and angiotensin 1-9. Involved in the degradation of atrial natriuretic factor (ANF) and brain natriuretic factor (BNP(1-32)). Displays UV-inducible elastase activity toward skin preelastic and elastic fibers. This is Neprilysin (MME) from Oryctolagus cuniculus (Rabbit).